A 250-amino-acid chain; its full sequence is Ribosomal RNA small subunit methyltransferase J (250 aa).

S-adenosyl-L-methionine is bound by residues 102–103 (RD), 118–119 (ER), 154–155 (SS), and Asp-172.

This sequence belongs to the methyltransferase superfamily. RsmJ family.

It is found in the cytoplasm. The enzyme catalyses guanosine(1516) in 16S rRNA + S-adenosyl-L-methionine = N(2)-methylguanosine(1516) in 16S rRNA + S-adenosyl-L-homocysteine + H(+). Its function is as follows. Specifically methylates the guanosine in position 1516 of 16S rRNA. This Edwardsiella ictaluri (strain 93-146) protein is Ribosomal RNA small subunit methyltransferase J.